We begin with the raw amino-acid sequence, 274 residues long: Pyrogallol hydroxytransferase small subunit (274 aa).

Residues Cys13, Cys16, Cys19, Cys23, Cys68, Cys71, Cys76, Cys109, Cys126, Cys129, Cys145, and Cys149 each coordinate [4Fe-4S] cluster.

In terms of assembly, heterodimer of a large and a small subunit. It depends on [4Fe-4S] cluster as a cofactor.

It carries out the reaction 1,2,3,5-tetrahydroxybenzene + 1,2,3-trihydroxybenzene = 1,2,3,5-tetrahydroxybenzene + 1,3,5-trihydroxybenzene. Functionally, isomerization of pyrogallol to phloroglucin. This chain is Pyrogallol hydroxytransferase small subunit (bthL), found in Pelobacter acidigallici.